Here is a 239-residue protein sequence, read N- to C-terminus: Orotidine 5'-phosphate decarboxylase (239 aa).

Residues Asp-15, Lys-37, 64-73, Thr-126, Arg-187, Gln-196, Gly-216, and Arg-217 each bind substrate; that span reads DLKFHDIPNT. Lys-66 serves as the catalytic Proton donor.

It belongs to the OMP decarboxylase family. Type 1 subfamily. As to quaternary structure, homodimer.

It catalyses the reaction orotidine 5'-phosphate + H(+) = UMP + CO2. It functions in the pathway pyrimidine metabolism; UMP biosynthesis via de novo pathway; UMP from orotate: step 2/2. Its function is as follows. Catalyzes the decarboxylation of orotidine 5'-monophosphate (OMP) to uridine 5'-monophosphate (UMP). The protein is Orotidine 5'-phosphate decarboxylase of Geobacter metallireducens (strain ATCC 53774 / DSM 7210 / GS-15).